Consider the following 359-residue polypeptide: Trans-enoyl reductase FSL5 (359 aa).

Residue 47–50 coordinates NADP(+); the sequence is IDGK. 134–141 is a substrate binding site; that stretch reads SGVGTIGL. NADP(+) contacts are provided by residues 169–172, 192–195, Tyr-210, and 257–258; these read STAT, SPHN, and LE. Substrate is bound at residue 277–281; the sequence is GPTLL. Residue 346-347 participates in NADP(+) binding; it reads VS.

It belongs to the zinc-containing alcohol dehydrogenase family. Monomer.

The protein operates within secondary metabolite biosynthesis. Its function is as follows. Trans-enoyl reductase; part of the gene cluster that mediates the biosynthesis of fusarielins F, G and H, decaketide compounds with 5 methylations and a decaline core that act as mycoestrogens as they stimulate growth of MCF-7 breast cancer cells. The initial compound in the pathway is produced by the reducing polyketide synthase FSL1. FSL1 lacks an active enoyl reductase (ER) domain and biosynthesis of fusarielins relies on the trans-acting enoyl reductase FSL5, before it is released through hydrolysis catalyzed by the thioesterase FSL2. Fusarielins F, G, and H have a C11=C12 cis double bond and is fully reduced between C10 and C11 and between C12 and C13. FSL3 can be involved in the formation of the C11=C12 cis double bond by moving a hypothetical C10=C11 or C12=C13 trans double bond to form prefusarielin. Prefusarielin is oxygenated at C15 and C16 by the cytochrome P450 monooxygenase FSL4, resulting in fusarielin F, which subsequently is epoxidized into fusarielin G by the same enzyme. The final step in the pathway is a reduction of the carboxylic acid moiety to yield fusarielin H via a still undetermined mechanism. This is Trans-enoyl reductase FSL5 from Gibberella zeae (strain ATCC MYA-4620 / CBS 123657 / FGSC 9075 / NRRL 31084 / PH-1) (Wheat head blight fungus).